The chain runs to 172 residues: Protein-export protein SecB (172 aa).

The protein belongs to the SecB family. Homotetramer, a dimer of dimers. One homotetramer interacts with 1 SecA dimer.

Its subcellular location is the cytoplasm. One of the proteins required for the normal export of preproteins out of the cell cytoplasm. It is a molecular chaperone that binds to a subset of precursor proteins, maintaining them in a translocation-competent state. It also specifically binds to its receptor SecA. This chain is Protein-export protein SecB, found in Cupriavidus pinatubonensis (strain JMP 134 / LMG 1197) (Cupriavidus necator (strain JMP 134)).